We begin with the raw amino-acid sequence, 78 residues long: Defensin-like protein 141 (78 aa).

The first 24 residues, Met-1–Gly-24, serve as a signal peptide directing secretion. 4 disulfides stabilise this stretch: Cys-31–Cys-76, Cys-40–Cys-59, Cys-45–Cys-70, and Cys-49–Cys-72.

Belongs to the DEFL family.

It localises to the secreted. This chain is Defensin-like protein 141 (LCR3), found in Arabidopsis thaliana (Mouse-ear cress).